The chain runs to 518 residues: Protein translocase subunit SecD (518 aa).

6 helical membrane passes run 9–29 (IVLS…NFIQ), 356–376 (GKKA…LSYG), 377–397 (VIGL…LALL), 406–426 (LPGI…NVLI), 463–483 (LIVA…FAVA), and 486–506 (IGII…IDVW).

This sequence belongs to the SecD/SecF family. SecD subfamily. In terms of assembly, forms a complex with SecF. Part of the essential Sec protein translocation apparatus which comprises SecA, SecYEG and auxiliary proteins SecDF-YajC and YidC.

It localises to the cell inner membrane. Part of the Sec protein translocase complex. Interacts with the SecYEG preprotein conducting channel. SecDF uses the proton motive force (PMF) to complete protein translocation after the ATP-dependent function of SecA. The polypeptide is Protein translocase subunit SecD (Rickettsia prowazekii (strain Madrid E)).